A 667-amino-acid chain; its full sequence is E3 ubiquitin-protein ligase Midline-1 (667 aa).

The segment at 10-60 adopts an RING-type zinc-finger fold; it reads CPICLELFEDPLLLPCAHSLCFNCAHRILVSHCATNESVESITAFQCPTCR. Phosphoserine is present on residues Ser-92 and Ser-96. 2 B box-type zinc fingers span residues 116-165 and 172-212; these read KVLC…IEPI and GLMC…VAAL. Cys-119, Cys-122, Cys-134, Cys-137, Cys-142, Cys-145, His-150, His-159, Cys-175, His-178, Cys-198, and His-204 together coordinate Zn(2+). Residues 205-264 adopt a coiled-coil conformation; sequence RDHQVAALSERYDKLKQNLESNLTNLIKRNTELETLLAKLIQTCQHVEVNASRQEAKLTE. The COS domain occupies 320–379; that stretch reads LKENDHARFLQTAKNITERVSMATASSQVLIPEINLNDTFDTFALDFSREKKLLECLDYL. Positions 381 to 484 constitute a Fibronectin type-III domain; that stretch reads APNPPTIREE…EPGKLKTNSQ (104 aa). The segment covering 471–485 has biased composition (polar residues); the sequence is SRSSEPGKLKTNSQP. The interval 471–524 is disordered; the sequence is SRSSEPGKLKTNSQPFKLDPKSAHRKLKVSHDNLTVERDESSSKKSHTPERFTS. The 178-residue stretch at 482-659 folds into the B30.2/SPRY domain; the sequence is NSQPFKLDPK…IITGLPIPDH (178 aa). Over residues 499–520 the composition is skewed to basic and acidic residues; sequence VSHDNLTVERDESSSKKSHTPE. Ser-511 is modified (phosphoserine).

Belongs to the TRIM/RBCC family. In terms of assembly, homodimer or heterodimer with MID2. Interacts with IGBP1. Interacts with TRIM16. Post-translationally, phosphorylated on serine and threonine residues. As to expression, in the fetus, highest expression found in kidney, followed by brain and lung. Expressed at low levels in fetal liver. In the adult, most abundant in heart, placenta and brain.

The protein resides in the cytoplasm. It localises to the cytoskeleton. Its subcellular location is the spindle. The enzyme catalyses S-ubiquitinyl-[E2 ubiquitin-conjugating enzyme]-L-cysteine + [acceptor protein]-L-lysine = [E2 ubiquitin-conjugating enzyme]-L-cysteine + N(6)-ubiquitinyl-[acceptor protein]-L-lysine.. Its function is as follows. Has E3 ubiquitin ligase activity towards IGBP1, promoting its monoubiquitination, which results in deprotection of the catalytic subunit of protein phosphatase PP2A, and its subsequent degradation by polyubiquitination. In Homo sapiens (Human), this protein is E3 ubiquitin-protein ligase Midline-1 (MID1).